Here is a 3855-residue protein sequence, read N- to C-terminus: MSGTFSRCMCTPAARVFWNAGQVFCTRCLSARSLLSPELQDTDLGAVGLFYKPRDKLHWKVPIGIPQVECTPSGCCWLSAVFPLARMTSGNHNFLQRLVKVADVLYRDGCLAPRHLRELQVYERGCNWYPITGPVPGMGLFANSMHVSDQPFPGATHVLTNSPLPQQACRQPFCPFEEAHSSVYRWKKFVVFTDSSLNGRSRMMWTPESDDSAALEVLPPELERQVEILIRSFPAHHPVDLADWELTESPENGFSFNTSHSCGHLVQNPDVFDGKCWLSCFLGQSVEVRCHEEHLADAFGYQTKWGVHGKYLQRRLQVRGIRAVVDPDGPIHVEALSCPQSWIRHLTLDDDVTPGFVRLTSLRIVPNTEPTTSRIFRFGAHKWYGAAGKRARAKRAAKSEKDSAPTPKVALPVPTCGITTYSPPTDGSCGWHVLAAIMNRMINGDFTSPLTQYNRPEDDWASDYDLVQAIQCLRLPATVVRNRACPNAKYLIKLNGVHWEVEVRSGMAPRSLSRECVVGVCSEGCVAPPYPADGLPKRALEALASAYRLPSDCVSSGIADFLANPPPQEFWTLDKMLTSPSPERSGFSSLYKLLLEVVPQKCGATEGAFIYAVERMLKDCPSSKQAMALLAKIKVPSSKAPSVSLDECFPTDVLADFEPASQERPQSSGAAVVLCSPDAKEFEEAAPEEVQESGHKAVHSALLAEGPNNEQVQVVAGEQLKLGGCGLAVGNAHEGALVSAGLINLVGGNLSPSDPMKENMLNSREDEPLDLSQPAPASTTTLVREQTPDNPGSDAGALPVTVREFVPTGPILCHVEHCGTESGDSSSPLDLSDAQTLDQPLNLSLAAWPVRATASDPGWVHGRREPVFVKPRNAFSDGDSALQFGELSESSSVIEFDRTKDAPVVDAPVDLTTSNEALSVVDPFEFAELKRPRFSAQALIDRGGPLADVHAKIKNRVYEQCLQACEPGSRATPATREWLDKMWDRVDMKTWRCTSQFQAGRILASLKFLPDMIQDTPPPVPRKNRASDNAGLKQLVAQWDRKLSVTPPPKPVGPVLDQIVPPPTDIQQEDVTPSDGPPHAPDFPSRVSTGGSWKGLMLSGTRLAGSISQRLMTWVFEVFSHLPAFMLTLFSPRGSMAPGDWLFAGVVLLALLLCRSYPILGCLPLLGVFSGSLRRVRLGVFGSWMAFAVFLFSTPSNPVGSSCDHDSPECHAELLALEQRQLWEPVRGLVVGPSGLLCVILGKLLGGSRYLWHVLLRLCMLADLALSLVYVVSQGRCHKCWGKCIRTAPAEVALNVFPFSRATRVSLVSLCDRFQTPKGVDPVHLATGWRGCWRGESPIHQPHQKPIAYANLDEKKMSAQTVVAVPYDPSQAIKCLKVLQAGGAIVDQPTPEVVRVSEIPFSAPFFPKVPVNPDCRVVVDSDTFVAAVRCGYSTAQLVLGRGNFAKLNQTPPRNSISTKTTGGASYTLAVAQVSAWTLVHFILGLWFTSPQVCGRGTADPWCSNPFSYPTYGPGVVCSSRLCVSADGVTLPLFSAVAQLSGREVGIFILVLVSLTALAHRMALKADMLVVFSAFCAYAWPMSSWLICFFPILLKWVTLHPLTMLWVHSFLVFCLPAAGILSLGITGLLWAIGRFTQVAGIITPYDIHQYTSGPRGAAAVATAPEGTYMAAVRRAALTGRTLIFTPSAVGSLLEGAFRTHKPCLNTVNVVGSSLGSGGVFTIDGRRTVVTAAHVLNGDTARVTGDSYNRMHTFKTNGDYAWSHADDWQGVAPVVKVAKGYRGRAYWQTSTGVEPGIIGEGFAFCFTNCGDSGSPVISESGDLIGIHTGSNKLGSGLVTTPEGETCTIKETKLSDLSRHFAGPSVPLGDIKLSPAIIPDVTSIPSDLASLLASVPVVEGGLSTVQLLCVFFLLWRMMGHAWTPIVAVGFFLLNEILPAVLVRAVFSFALFVLAWATPWSAQVLMIRLLTASLNRNKLSLAFYALGGVVGLAAEIGTFAGRLSELSQALSTYCFLPRVLAMTSCVPTIIIGGLHTLGVILWLFKYRCLHNMLVGDGSFSSAFFLRYFAEGNLRKGVSQSCGMNNESLTAALACKLSQADLDFLSSLTNFKCFVSASNMKNAAGQYIEAAYAKALRQELASLVQIDKMKGVLSKLEAFAETATPSLDIGDVIVLLGQHPHGSILDINVGTERKTVSVQETRSLGGSKFSVCTVVSNTPVDALTGIPLQTPTPLFENGPRHRSEEDDLKVERMKKHCVSLGFHNINGKVYCKIWDKSTGDTFYTDDSRYTQDHAFQDRSADYRDRDYEGVQTTPQQGFDPKSETPVGTVVIGGITYNRYLIKGKEVLVPKPDNCLEAAKLSLEQALAGMGQTCDLTAAEVEKLKRIISQLQGLTTEQALNCLLAASGLTRCGRGGLVVTETAVKIIKYHSRTFTLGPLDLKVTSEVEVKKSTEQGHAVVANLCSGVILMRPHPPSLVDVLLKPGLDTIPGIQPGHGAGNMGVDGSIWDFETAPTKAELELSKQIIQACEVRRGDAPNLQLPYKLYPVRGDPERHKGRLINTRFGDLPYKTPQDTKSAIHAACCLHPNGAPVSDGKSTLGTTLQHGFELYVPTVPYSVMEYLDSRPDTPFMCTKHGTSKAAAEDLQKYDLSTQGFVLPGVLRLVRRFIFGHIGKAPPLFLPSTYPAKNSMAGINGQRFPTKDVQSIPEIDEMCARAVKENWQTVTPCTLKKQYCSKPKTRTILGTNNFIALAHRSALSGVTQAFMKKAWKSPIALGKNKFKELHCTVAGRCLEADLASCDRSTPAIVRWFVANLLYELAGCEEYLPSYVLNCCHDLVATQDGAFTKRGGLSSGDPVTSVSNTVYSLVIYAQHMVLSALKMGHEIGLKFLEEQLKFEDLLEIQPMLVYSDDLVLYAERPTFPNYHWWVEHLDLMLGFRTDPKKTVITDKPSFLGCRIEAGRQLVPNRDRILAALAYHMKAQNASEYYASAAAILMDSCACIDHDPEWYEDLICGIARCARQDGYSFPGPAFFMSMWEKLRSHNEGKKFRHCGICDAKADYASACGLDLCLFHSHFHQHCPVTLSCGHHAGSKECSQCQSPVGAGRSPLDAVLKQIPYKPPRTVIMKVGNKTTALDPGRYQSRRGLVAVKRGIAGNEVDLSDGDYQVVPLLPTCKDINMVKVACNVLLSKFIVGPPGSGKTTWLLSQVQDDDVIYTPTHQTMFDIVSALKVCRYSIPGASGLPFPPPARSGPWVRLIASGHVPGRVSYLDEAGYCNHLDILRLLSKTPLVCLGDLQQLHPVGFDSYCYVFDQMPQKQLTTIYRFGPNICAAIQPCYREKLESKARNTRVVFTTRPVAFGQVLTPYHKDRIGSAITIDSSQGATFDIVTLHLPSPKSLNKSRALVAITRARHGLFIYDPHNQLQEFFNLTPERTDCNLVFSRGDELVVLNADNAVTTVAKALETGPSRFRVSDPRCKSLLAACSASLEGSCMPLPQVAHNLGFYFSPDSPTFAPLPKELAPHWPVVTHQNNRAWPDRLVASMRPIDARYSKPMVGAGYVVGPSTFLGTPGVVSYYLTLYIRGEPQALPETLVSTGRIATDCREYLDAAEEEAAKELPHAFIGDVKGTTVGGCHHITSKYLPRSLPKDSVAVVGVSSPGRAAKAVCTLTDVYLPELRPYLQPETASKCWKLKLDFRDVRLMVWKGATAYFQLEGLTWSALPDYARFIQLPKDAVVYIDPCIGPATANRKVVRTTDWRADLAVTPYDYGAQNILTTAWFEDLGPQWKILGLQPFRRAFGFENTEDWAILARRMNDGKDYTDYNWNCVRERPHAIYGRARDHTYHFAPGTELQVELGKPRLPPGQVP.

The C4-type; atypical zinc-finger motif lies at 8–28; it reads CMCTPAARVFWNAGQVFCTRC. The Peptidase C31 domain maps to 69 to 180; sequence ECTPSGCCWL…QPFCPFEEAH (112 aa). The segment at 69-182 is PCP1-alpha; the sequence is ECTPSGCCWL…FCPFEEAHSS (114 aa). Residues C76 and H146 each act as for nsp1-alpha papain-like cysteine proteinase activity in the active site. The important for host EIF2AK2 inhibition stretch occupies residues 203 to 204; that stretch reads MM. A PCP1-beta region spans residues 269 to 384; that stretch reads PDVFDGKCWL…IFRFGAHKWY (116 aa). The Peptidase C32 domain maps to 269–385; that stretch reads PDVFDGKCWL…FRFGAHKWYG (117 aa). Catalysis depends on for nsp1-beta papain-like cysteine proteinase activity residues C276 and H345. The segment at 418–505 is OTU-like; it reads ITTYSPPTDG…GVHWEVEVRS (88 aa). A Peptidase C33 domain is found at 420-527; the sequence is TYSPPTDGSC…VGVCSEGCVA (108 aa). Catalysis depends on for nsp2 cysteine proteinase activity residues C429 and H498. 2 disordered regions span residues 752-797 and 1047-1088; these read PSDP…DAGA and PPPK…SRVS. Over residues 775-790 the composition is skewed to polar residues; that stretch reads APASTTTLVREQTPDN. Transmembrane regions (helical) follow at residues 1134–1154, 1179–1199, and 1252–1272; these read GSMAPGDWLFAGVVLLALLLC, GVFGSWMAFAVFLFSTPSNPV, and WHVLLRLCMLADLALSLVYVV. Residues 1149–1272 are HD1; it reads LALLLCRSYP…DLALSLVYVV (124 aa). The WCCH stretch occupies residues 1327–1351; it reads TGWRGCWRGESPIHQPHQKPIAYAN. 5 consecutive transmembrane segments (helical) span residues 1468–1488, 1521–1541, 1543–1563, 1573–1593, and 1609–1629; these read LAVAQVSAWTLVHFILGLWFT, LCVSADGVTLPLFSAVAQLSG, EVGIFILVLVSLTALAHRMAL, AFCAYAWPMSSWLICFFPILL, and FLVFCLPAAGILSLGITGLLW. Positions 1468–1629 are HD2; that stretch reads LAVAQVSAWT…LSLGITGLLW (162 aa). The Peptidase S32 domain maps to 1694 to 1896; that stretch reads GAFRTHKPCL…SLLASVPVVE (203 aa). Residues H1732, D1757, and S1810 each act as charge relay system; for serine protease nsp4 activity in the active site. 4 helical membrane passes run 1919–1939, 1943–1963, 1977–1997, and 2020–2040; these read WTPIVAVGFFLLNEILPAVLV, FSFALFVLAWATPWSAQVLMI, LAFYALGGVVGLAAEIGTFAG, and SCVPTIIIGGLHTLGVILWLF. Residues 1919–2040 are HD3; sequence WTPIVAVGFF…HTLGVILWLF (122 aa). Residues 2381–2544 enclose the NiRAN domain; that stretch reads IISQLQGLTT…LPYKLYPVRG (164 aa). A RdRp catalytic domain is found at 2783-2917; the sequence is GRCLEADLAS…YAERPTFPNY (135 aa). Positions 3038-3101 constitute an AV ZBD domain; it reads GKKFRHCGIC…SPVGAGRSPL (64 aa). Residues C3044, C3047, C3057, C3062, H3065, H3067, H3069, H3071, C3078, H3080, C3087, and C3090 each coordinate Zn(2+). One can recognise a (+)RNA virus helicase ATP-binding domain in the interval 3151–3310; the sequence is DLSDGDYQVV…VFDQMPQKQL (160 aa). Position 3186-3193 (3186-3193) interacts with ATP; sequence GPPGSGKT. The (+)RNA virus helicase C-terminal domain occupies 3311-3440; sequence TTIYRFGPNI…FSRGDELVVL (130 aa). In terms of domain architecture, AV-Nsp11N/CoV-Nsp15M spans 3479–3576; that stretch reads EGSCMPLPQV…LTLYIRGEPQ (98 aa). Residues 3578–3700 form the NendoU domain; it reads LPETLVSTGR…MVWKGATAYF (123 aa). Active-site residues include H3609, H3624, and K3653.

This sequence belongs to the arteriviridae polyprotein family. In terms of assembly, nsp1-alpha papain-like: Interacts with host RNF31. As to quaternary structure, interacts with host EIF2AK2; this interaction occurs in host stress granules and leads to EIF2AK2 inhibition. Interacts with host G3BP1; this interaction probably plays a role in Nsp1-beta-mediated inhibition of host EIF2AK2. Interacts with host DDX18; this interaction redistributes host DDX18 to the cytoplasm. In terms of assembly, interacts with host IFITM1. As to quaternary structure, interacts with host DDX5. Interacts with host OTULIN. In terms of assembly, interacts with host LGALS3. Post-translationally, specific enzymatic cleavages in vivo by its own proteases yield mature proteins. Nsp1 is autocleaved into two subunits, Nsp1-alpha and Nsp1-beta. There are two alternative pathways for processing. Either nsp4-5 is cleaved, which represents the major pathway or the nsp5-6 and nsp6-7 are processed, which represents the minor pathway. The major pathway occurs when nsp2 acts as a cofactor for nsp4.

The protein resides in the host nucleus. It localises to the host cytoplasm. The protein localises to the host membrane. Its subcellular location is the host endoplasmic reticulum. It is found in the host perinuclear region. The catalysed reaction is RNA(n) + a ribonucleoside 5'-triphosphate = RNA(n+1) + diphosphate. The enzyme catalyses ATP + H2O = ADP + phosphate + H(+). It catalyses the reaction Thiol-dependent hydrolysis of ester, thioester, amide, peptide and isopeptide bonds formed by the C-terminal Gly of ubiquitin (a 76-residue protein attached to proteins as an intracellular targeting signal).. It carries out the reaction uridylyl-uridylyl-ribonucleotide-RNA = a 3'-end uridylyl-2',3'-cyclophospho-uridine-RNA + a 5'-end dephospho-ribonucleoside-RNA. Contains the activities necessary for the transcription of negative stranded RNA, leader RNA, subgenomic mRNAs and progeny virion RNA as well as proteinases responsible for the cleavage of the polyprotein into functional products. Functionally, inhibits host IFN-beta production. Plays a role in the degradation of the host transcriptional activator CREBBP protein. The degradation of host CREBBP which is a key component of the IFN enhanceosome is likely responsible for the inhibition of interferon mediated by Nsp1-alpha. Also participates in the inhibition of host NF-kappa-B activation by counteracting LUBAC-dependent induction of NF-kappa-B. Reduces host NEMO ubiquitination by blocking the interaction between the two LUBAC complex components RNF31 and SHARPIN. Its function is as follows. Plays a role in blocking host mRNA nuclear export to the cytoplasm and subversion of host protein synthesis. Additionally, inhibits the interferon-activated JAK/STAT signal transduction by mediating the ubiquitination and subsequent proteasomal degradation of host KPNA1. Repurposes the host antiviral stress granules into a proviral platform to counteract the EIF2AK2/PKR restriction, thereby regulating the host inflammatory response. In terms of biological role, multifunctional protein that acts as a viral protease and as a viral antagonist of host immune response. Cleaves the nsp2/nsp3 site in the viral polyprotein. Displays deubiquitinating activity that cleaves both ubiquitinated and ISGylated products and therefore inhibits ubiquitin and ISG15-dependent host innate immunity. Also deubiquinates host NFKBIA, thereby interfering with NFKBIA degradation and impairing subsequent NF-kappa-B activation. Plays a role in the inhibition of the immune response by interacting with host IFITM1. This interaction leads to the proteasomal degradation of the IFN-induced antiviral protein IFITM1. Functionally, cleaves the majority of cleavage sites present in the C-terminus of the polyprotein. Triggers host apoptosis through caspase-3, -8, and -9 activations. Subverts host innate immune responses through its protease activity. Targets the NF-kappa-B essential modulator NEMO and mediates its cleavage. Blocks host interferon beta induction and downstream signaling by cleaving mitochondrial MAVS, dislodging it from the mitochondria. Impairs host defense by cleaving host mRNA-decapping enzyme DCP1A to attenuate its antiviral activity. Its function is as follows. Plays a role in the initial induction of autophagosomes from host endoplasmic reticulum. In terms of biological role, plays a role in the inhibition of host STAT3 signaling pathway by inducing the degradation of STAT3. Responsible for replication and transcription of the viral RNA genome. Functionally, displays RNA and DNA duplex-unwinding activities with 5' to 3' polarity. Its function is as follows. Plays a role in viral transcription/replication and prevents the simultaneous activation of host cell dsRNA sensors, such as MDA5/IFIH1, OAS, PKR and NLRP3 inflammasome. Acts by degrading the 5'-polyuridines generated during replication of the poly(A) region of viral genomic and subgenomic RNAs. Catalyzes a two-step reaction in which a 2'3'-cyclic phosphate (2'3'-cP) is first generated by 2'-O transesterification, which is then hydrolyzed to a 3'-phosphate (3'-P). If not degraded, poly(U) RNA would hybridize with poly(A) RNA tails and activate host dsRNA sensors. Also plays a role in the inhibition of host type I interferon production by recruiting host OTULIN to promote removal of linear ubiquitination targeting host NEMO. This chain is Replicase polyprotein 1ab (rep), found in Sus scrofa (Pig).